A 543-amino-acid polypeptide reads, in one-letter code: Protein pbn1 (543 aa).

Over 1-503 (MRRRITFVQR…KGFFQSKAIE (503 aa)) the chain is Lumenal. N409 is a glycosylation site (N-linked (GlcNAc...) asparagine). A helical transmembrane segment spans residues 504–524 (LGTMIVIGLGSLWVLWKLGAI). Residues 525–543 (AWSSGTRPQRKSTKQKKSE) lie on the Cytoplasmic side of the membrane.

The protein belongs to the PIGX family.

It is found in the endoplasmic reticulum membrane. Its pathway is glycolipid biosynthesis; glycosylphosphatidylinositol-anchor biosynthesis. Functionally, required for proper folding and/or the stability of a subset of proteins in the endoplasmic reticulum. Component of glycosylphosphatidylinositol-mannosyltransferase 1 which transfers the first of the 4 mannoses in the GPI-anchor precursors during GPI-anchor biosynthesis. Probably acts by stabilizing the mannosyltransferase gpi14. The sequence is that of Protein pbn1 (pbn1) from Aspergillus oryzae (strain ATCC 42149 / RIB 40) (Yellow koji mold).